The primary structure comprises 153 residues: UPF0235 protein C15orf40 (153 aa).

Positions 1-12 (MLRLRSGLRHLR) are enriched in basic residues. Residues 1–55 (MLRLRSGLRHLRATPNTRGSARLLCAEMPKKAGATTKGKSQSKEPERPLPPLGPV) are disordered. Position 116 is a phosphoserine (Ser-116).

This sequence belongs to the UPF0235 family.

The sequence is that of UPF0235 protein C15orf40 (C15orf40) from Homo sapiens (Human).